Reading from the N-terminus, the 352-residue chain is uncharacterized protein (352 aa).

The next 8 membrane-spanning stretches (helical) occupy residues 6–26 (FIFLMFISIGILLLLLNIINP), 30–50 (FHIVEWKTIFSLFYLMVIINI), 76–96 (IFLTLFLSSLITNDVSLFVII), 151–171 (EFIINMIPFEIFGILAILPFL), 197–217 (FILVLLCVFGYLNFIYILPLI), 226–246 (VKVDYLFLLTFIFLFVDIEGL), 291–311 (WLPIAYGVNIGGNGTLIASFA), and 330–350 (LIGGIIYIMHLIVLVAYAKIF).

It belongs to the CitM (TC 2.A.11) transporter family.

The protein localises to the cell membrane. This is an uncharacterized protein from Methanocaldococcus jannaschii (strain ATCC 43067 / DSM 2661 / JAL-1 / JCM 10045 / NBRC 100440) (Methanococcus jannaschii).